We begin with the raw amino-acid sequence, 219 residues long: FMN-dependent NADH:quinone oxidoreductase 2 (219 aa).

FMN is bound by residues S10 and 23–25 (SIS).

Belongs to the azoreductase type 1 family. As to quaternary structure, homodimer. FMN is required as a cofactor.

It catalyses the reaction 2 a quinone + NADH + H(+) = 2 a 1,4-benzosemiquinone + NAD(+). The catalysed reaction is N,N-dimethyl-1,4-phenylenediamine + anthranilate + 2 NAD(+) = 2-(4-dimethylaminophenyl)diazenylbenzoate + 2 NADH + 2 H(+). Quinone reductase that provides resistance to thiol-specific stress caused by electrophilic quinones. Its function is as follows. Also exhibits azoreductase activity. Catalyzes the reductive cleavage of the azo bond in aromatic azo compounds to the corresponding amines. The sequence is that of FMN-dependent NADH:quinone oxidoreductase 2 from Colwellia psychrerythraea (strain 34H / ATCC BAA-681) (Vibrio psychroerythus).